The primary structure comprises 192 residues: MDSGRDSGNDSGSVNMARARVALTEHTRYVHDFPAEGVLFEDLTPVLANAEAFAAVVDAQAEAAEELGAEIIGGLDARGFLLGSAVAYKLGLGVIAIRKKGKLPPPVVTQDYDLEYGSAALELPAEGLDLEGRRVVLIDDVLATGGTLAAARKLIETCGGNVTGYVLAIEVGGLGGRERLGDIPVHVIRDPQ.

Belongs to the purine/pyrimidine phosphoribosyltransferase family. Homodimer.

Its subcellular location is the cytoplasm. The catalysed reaction is AMP + diphosphate = 5-phospho-alpha-D-ribose 1-diphosphate + adenine. Its pathway is purine metabolism; AMP biosynthesis via salvage pathway; AMP from adenine: step 1/1. Functionally, catalyzes a salvage reaction resulting in the formation of AMP, that is energically less costly than de novo synthesis. The sequence is that of Adenine phosphoribosyltransferase from Corynebacterium efficiens (strain DSM 44549 / YS-314 / AJ 12310 / JCM 11189 / NBRC 100395).